A 255-amino-acid polypeptide reads, in one-letter code: HTH-type transcriptional regulator SkgA (255 aa).

In terms of domain architecture, HTH merR-type spans 3–72 (VYTVKQMARL…LKDIQAALDQ (70 aa)). Residues 6 to 25 (VKQMARLSGVSVRALHHYDA) constitute a DNA-binding region (H-T-H motif).

In terms of biological role, regulates the induction of katG (catalase-peroxidase) in stationary phase. This is HTH-type transcriptional regulator SkgA (skgA) from Caulobacter vibrioides (strain ATCC 19089 / CIP 103742 / CB 15) (Caulobacter crescentus).